Consider the following 454-residue polypeptide: Methylenetetrahydrofolate--tRNA-(uracil-5-)-methyltransferase TrmFO (454 aa).

9–14 (GAGLAG) lines the FAD pocket. Residues 432 to 454 (LERVSPPSRETGEPTGAEQVDLA) are disordered.

The protein belongs to the MnmG family. TrmFO subfamily. Requires FAD as cofactor.

It localises to the cytoplasm. The enzyme catalyses uridine(54) in tRNA + (6R)-5,10-methylene-5,6,7,8-tetrahydrofolate + NADH + H(+) = 5-methyluridine(54) in tRNA + (6S)-5,6,7,8-tetrahydrofolate + NAD(+). It carries out the reaction uridine(54) in tRNA + (6R)-5,10-methylene-5,6,7,8-tetrahydrofolate + NADPH + H(+) = 5-methyluridine(54) in tRNA + (6S)-5,6,7,8-tetrahydrofolate + NADP(+). In terms of biological role, catalyzes the folate-dependent formation of 5-methyl-uridine at position 54 (M-5-U54) in all tRNAs. The sequence is that of Methylenetetrahydrofolate--tRNA-(uracil-5-)-methyltransferase TrmFO from Pelobacter propionicus (strain DSM 2379 / NBRC 103807 / OttBd1).